Consider the following 59-residue polypeptide: Large ribosomal subunit protein bL32 (59 aa).

Residues 1–59 form a disordered region; that stretch reads MAVQQNKKSPSKRGMHRAHDFLTAPVIAIEPSTGEAHRRHHISPNGFYRGRKVVKGKDE. Basic residues predominate over residues 49-59; sequence RGRKVVKGKDE.

This sequence belongs to the bacterial ribosomal protein bL32 family.

The polypeptide is Large ribosomal subunit protein bL32 (Laribacter hongkongensis (strain HLHK9)).